Here is a 172-residue protein sequence, read N- to C-terminus: 3-hydroxydecanoyl-[acyl-carrier-protein] dehydratase (172 aa).

H70 is a catalytic residue.

This sequence belongs to the thioester dehydratase family. FabA subfamily. Homodimer.

The protein resides in the cytoplasm. The enzyme catalyses a (3R)-hydroxyacyl-[ACP] = a (2E)-enoyl-[ACP] + H2O. It carries out the reaction (3R)-hydroxydecanoyl-[ACP] = (2E)-decenoyl-[ACP] + H2O. The catalysed reaction is (2E)-decenoyl-[ACP] = (3Z)-decenoyl-[ACP]. Its pathway is lipid metabolism; fatty acid biosynthesis. Functionally, necessary for the introduction of cis unsaturation into fatty acids. Catalyzes the dehydration of (3R)-3-hydroxydecanoyl-ACP to E-(2)-decenoyl-ACP and then its isomerization to Z-(3)-decenoyl-ACP. Can catalyze the dehydratase reaction for beta-hydroxyacyl-ACPs with saturated chain lengths up to 16:0, being most active on intermediate chain length. This is 3-hydroxydecanoyl-[acyl-carrier-protein] dehydratase from Xylella fastidiosa (strain M23).